The following is a 368-amino-acid chain: NAD(P)H-quinone oxidoreductase subunit 1, chloroplastic (368 aa).

Transmembrane regions (helical) follow at residues 11-31 (RVIN…LIWI), 33-53 (IYIL…VWLE), 98-118 (WLFS…YLVI), 131-151 (IGVF…LMAG), 177-197 (LALC…VDIV), 205-225 (FWGW…ISSL), 255-275 (FGLF…FVTI), 305-325 (VLGI…FLFI), and 348-368 (FLLP…LLLL).

The protein belongs to the complex I subunit 1 family. NDH is composed of at least 16 different subunits, 5 of which are encoded in the nucleus.

It localises to the plastid. Its subcellular location is the chloroplast thylakoid membrane. The enzyme catalyses a plastoquinone + NADH + (n+1) H(+)(in) = a plastoquinol + NAD(+) + n H(+)(out). The catalysed reaction is a plastoquinone + NADPH + (n+1) H(+)(in) = a plastoquinol + NADP(+) + n H(+)(out). In terms of biological role, NDH shuttles electrons from NAD(P)H:plastoquinone, via FMN and iron-sulfur (Fe-S) centers, to quinones in the photosynthetic chain and possibly in a chloroplast respiratory chain. The immediate electron acceptor for the enzyme in this species is believed to be plastoquinone. Couples the redox reaction to proton translocation, and thus conserves the redox energy in a proton gradient. The polypeptide is NAD(P)H-quinone oxidoreductase subunit 1, chloroplastic (Cycas taitungensis (Prince sago)).